The following is a 534-amino-acid chain: CTP synthase (534 aa).

Positions 1–265 (MKYIVVTGGV…TTQLMKHLRL (265 aa)) are amidoligase domain. CTP is bound at residue Ser-12. Ser-12 is a UTP binding site. 13-18 (GLGKGI) is a binding site for ATP. Tyr-53 is a binding site for L-glutamine. Position 70 (Asp-70) interacts with ATP. Mg(2+) contacts are provided by Asp-70 and Glu-140. CTP-binding positions include 147–149 (DIE), 186–191 (KTKPTQ), and Lys-222. UTP-binding positions include 186-191 (KTKPTQ) and Lys-222. The Glutamine amidotransferase type-1 domain occupies 289–530 (KLAIVGKYTN…VRAMCKYRKE (242 aa)). Gly-352 serves as a coordination point for L-glutamine. Cys-379 serves as the catalytic Nucleophile; for glutamine hydrolysis. Residues 380 to 383 (LGMQ), Glu-403, and Arg-460 each bind L-glutamine. Residues His-503 and Glu-505 contribute to the active site.

Belongs to the CTP synthase family. Homotetramer.

It catalyses the reaction UTP + L-glutamine + ATP + H2O = CTP + L-glutamate + ADP + phosphate + 2 H(+). It carries out the reaction L-glutamine + H2O = L-glutamate + NH4(+). The catalysed reaction is UTP + NH4(+) + ATP = CTP + ADP + phosphate + 2 H(+). The protein operates within pyrimidine metabolism; CTP biosynthesis via de novo pathway; CTP from UDP: step 2/2. With respect to regulation, allosterically activated by GTP, when glutamine is the substrate; GTP has no effect on the reaction when ammonia is the substrate. The allosteric effector GTP functions by stabilizing the protein conformation that binds the tetrahedral intermediate(s) formed during glutamine hydrolysis. Inhibited by the product CTP, via allosteric rather than competitive inhibition. Functionally, catalyzes the ATP-dependent amination of UTP to CTP with either L-glutamine or ammonia as the source of nitrogen. Regulates intracellular CTP levels through interactions with the four ribonucleotide triphosphates. The protein is CTP synthase of Methanosarcina mazei (strain ATCC BAA-159 / DSM 3647 / Goe1 / Go1 / JCM 11833 / OCM 88) (Methanosarcina frisia).